A 399-amino-acid chain; its full sequence is uncharacterized protein (399 aa).

The tract at residues 375–399 (AAGGHRGSHGKSEQAATVRVVDDRR) is disordered.

The protein belongs to the mycobacterial PPE family.

This is an uncharacterized protein from Mycobacterium tuberculosis (strain CDC 1551 / Oshkosh).